A 111-amino-acid polypeptide reads, in one-letter code: Prothymosin alpha-A (111 aa).

Positions 1-111 (MSDTAVDASV…IKKQKTDEDD (111 aa)) are disordered. Residues 9 to 42 (SVEKTTKDLKAKEKEVVEEAENGKDKPTNGKAEN) are compositionally biased toward basic and acidic residues. Acidic residues-rich tracts occupy residues 43–81 (EENG…DEVE) and 90–100 (EDDEDDDDDDV). The span at 101–111 (EIKKQKTDEDD) shows a compositional bias: basic and acidic residues.

This sequence belongs to the pro/parathymosin family.

The protein localises to the nucleus. The polypeptide is Prothymosin alpha-A (ptma-a) (Xenopus laevis (African clawed frog)).